We begin with the raw amino-acid sequence, 864 residues long: E3 ubiquitin-protein ligase Itchy (864 aa).

Positions 1–115 (MSDSGPQLDS…LKSNNMKLEE (115 aa)) constitute a C2 domain. Serine 2 is subject to N-acetylserine. Over residues 151 to 164 (NGETSCSESTTQND) the composition is skewed to polar residues. A disordered region spans residues 151 to 294 (NGETSCSEST…SQAPLPPGWE (144 aa)). A compositionally biased stretch (basic and acidic residues) spans 165–174 (DGCRTRDDTR). The segment covering 195-206 (NGNNSPSLSNGG) has biased composition (low complexity). Residue serine 199 is modified to Phosphoserine; by MAPK8. Positions 210–224 (SRPPRPSRPPPPTPR) are enriched in pro residues. Threonine 222 bears the Phosphothreonine; by MAPK8 mark. Low complexity predominate over residues 230 to 259 (NGSPSTNSDSDGSSTGSLPPTNTNVNTSTS). Serine 232 carries the post-translational modification Phosphoserine; by MAPK8. WW domains follow at residues 287 to 320 (APLP…RPEP) and 319 to 352 (EPLP…RPTL). Threonine 346 is modified (phosphothreonine; by SGK3). Positions 356-432 (RNYEQWQLQR…RITQWEDPRS (77 aa)) are required for interaction with FYN. At tyrosine 381 the chain carries Phosphotyrosine; by FYN. WW domains are found at residues 399–432 (GPLP…DPRS) and 439–472 (KPLP…DPRT). Serine 411 carries the post-translational modification Phosphoserine; by SGK3. One can recognise an HECT domain in the interval 530–864 (SPQDLRRRLW…IEETEGFGQE (335 aa)). Positions 535-544 (RRRLWVIFPG) are MAP kinase docking site. Cysteine 832 functions as the Glycyl thioester intermediate in the catalytic mechanism.

In terms of assembly, monomer. Part of a ternary complex composed of SMAD3, ITCH/AIP4 and NEDD9/HEF1; within the complex NEDD9/HEF1 interacts (via N-terminus) with ITCH/AIP4 (via WW domains); the complex mediates ubiquitination and proteasomal degradation of NEDD9/HEF1. Interacts (via WW domains) with OCNL. Interacts (via WW domains) with NOTCH1. Interacts (via WW domains) JUN. Interacts with JUNB; the interaction promotes ITCH-mediated ubiquitination and degradation of JUNB. Interacts with FYN; the interaction phosphorylates ITCH on Tyr-381 decreasing binding of JUNB. Interacts (via WW domain 2) with N4BP1; the interaction inhibits the E3 ubiquitin-protein ligase activity. Interacts with NDFIP1 and NDFIP2; the interaction with NDFIP proteins activates the E3 ubiquitin-protein ligase and may induce its recruitment to exosomes. Interacts with ARHGEF7. Interacts with RNF11. Interacts (via the WW 1 domain) with NFE2 (via the PXY motif 1); the interaction promotes 'Lys-63'-linked ubiquitination of NFE2, retains it in the cytoplasm and prevents its transactivation activity. Interacts (via WW domains) with CXCR4 (via C-terminus); the interaction depends on CXCR4 phosphorylation. Found in a complex with E3 ligase DTX3L and ESCRT-0 components HGS and STAM. Interacts with DTX3L (via C-terminus); the interaction is increased upon CXCL12 stimulation and inhibits ITCH catalytic activity (the interaction is direct). Interacts with HGS. Interacts (via WW domains) with PCBP2 within a complex containing ITCH, MAVS and PCBP2. Interacts (via WW domains) with TXNIP (via C-terminus). Interacts with p15 BID. Interacts with ERBB4. Interacts with DTX1. Interacts with SPART. Interacts with SNX9 and SNX18. Interacts (via its WW domains) with ATN1. Interacts (via WW domains) with SGK3. Interacts with CBLC. Interacts with OTUD7B. Interacts (via WW domain 1,2 and 3) with PI4K2A; the interaction inhibits PI4K2A catalytic activity and promotes ITCH catalytic activity. Interacts with ARRDC4. Part of a complex containing ITCH, NDFIP1 and MAP3K7. Interacts with UBE2L3; the interaction is mediated by NDFIP1. Interacts with MAPK8/JNK1. Interacts (via WW domains) with ARRDC1 (via PPxY motifs); the interaction is direct and participates in the recruitment of the ubiquitin-protein ligase ITCH to the NOTCH1 receptor. Interacts (via WW domains) with ARRDC2. Interacts (via WW domains) with ARRDC3. Interacts directly with LDLRAD3; this interaction promotes ITCH auto-ubiquitination leading to its degradation. Interacts with ENTREP1; enhances the ubiquitination of CXCR4 by ITCH and its subsequent endocytosis. Interacts with USP12 and WDR48/UAF1; the interaction is more efficient when both USP12 and WDR48/UAF1 are involved and may facilitate the recruitment of the USP12 deubiquitinase complex to Notch. As to quaternary structure, (Microbial infection) Interacts with Epstein-Barr virus LMP2A. In terms of processing, on T-cell activation, phosphorylation by the JNK cascade on serine and threonine residues surrounding the PRR domain accelerates the ubiquitination and degradation of JUN and JUNB. The increased ITCH catalytic activity due to phosphorylation by JNK1 may occur due to a conformational change disrupting the interaction between the PRR/WW motifs domain and the HECT domain and, thus exposing the HECT domain. Phosphorylation by FYN reduces interaction with JUNB and negatively controls JUN ubiquitination and degradation. Interacts directly with LDLRAD3; this interaction promotes ITCH auto-ubiquitination leading to its degradation. Monoubiquitinated. Autopolyubiquitinated with 'Lys-63' linkages which does not lead to protein degradation. In terms of tissue distribution, detected in uterus (at protein level). Widely expressed.

The protein resides in the cell membrane. The protein localises to the cytoplasm. It is found in the nucleus. Its subcellular location is the early endosome membrane. It localises to the endosome membrane. It carries out the reaction S-ubiquitinyl-[E2 ubiquitin-conjugating enzyme]-L-cysteine + [acceptor protein]-L-lysine = [E2 ubiquitin-conjugating enzyme]-L-cysteine + N(6)-ubiquitinyl-[acceptor protein]-L-lysine.. It participates in protein modification; protein ubiquitination. Its activity is regulated as follows. Activated by NDFIP1- and NDFIP2-binding. Activated by PI4K2A-binding. Inhibited by DTX3L-binding. Inhibited by N4BP1 binding. Acts as an E3 ubiquitin-protein ligase which accepts ubiquitin from an E2 ubiquitin-conjugating enzyme in the form of a thioester and then directly transfers the ubiquitin to targeted substrates. It catalyzes 'Lys-29'-, 'Lys-48'- and 'Lys-63'-linked ubiquitin conjugation. Involved in the control of inflammatory signaling pathways. Is an essential component of a ubiquitin-editing protein complex, comprising also TNFAIP3, TAX1BP1 and RNF11, that ensures the transient nature of inflammatory signaling pathways. Promotes the association of the complex after TNF stimulation. Once the complex is formed, TNFAIP3 deubiquitinates 'Lys-63' polyubiquitin chains on RIPK1 and catalyzes the formation of 'Lys-48'-polyubiquitin chains. This leads to RIPK1 proteasomal degradation and consequently termination of the TNF- or LPS-mediated activation of NFKB1. Ubiquitinates RIPK2 by 'Lys-63'-linked conjugation and influences NOD2-dependent signal transduction pathways. Regulates the transcriptional activity of several transcription factors involved in immune response. Ubiquitinates NFE2 by 'Lys-63' linkages and is implicated in the control of the development of hematopoietic lineages. Mediates JUN ubiquitination and degradation. Mediates JUNB ubiquitination and degradation. Critical regulator of type 2 helper T (Th2) cell cytokine production by inducing JUNB ubiquitination and degradation. Involved in the negative regulation of MAVS-dependent cellular antiviral responses. Ubiquitinates MAVS through 'Lys-48'-linked conjugation resulting in MAVS proteasomal degradation. Following ligand stimulation, regulates sorting of Wnt receptor FZD4 to the degradative endocytic pathway probably by modulating PI42KA activity. Ubiquitinates PI4K2A and negatively regulates its catalytic activity. Ubiquitinates chemokine receptor CXCR4 and regulates sorting of CXCR4 to the degradative endocytic pathway following ligand stimulation by ubiquitinating endosomal sorting complex required for transport ESCRT-0 components HGS and STAM. Targets DTX1 for lysosomal degradation and controls NOTCH1 degradation, in the absence of ligand, through 'Lys-29'-linked polyubiquitination. Ubiquitinates SNX9. Ubiquitinates MAP3K7 through 'Lys-48'-linked conjugation. Together with UBR5, involved in the regulation of apoptosis and reactive oxygen species levels through the ubiquitination and proteasomal degradation of TXNIP: catalyzes 'Lys-48'-/'Lys-63'-branched ubiquitination of TXNIP. ITCH synthesizes 'Lys-63'-linked chains, while UBR5 is branching multiple 'Lys-48'-linked chains of substrate initially modified. Mediates the antiapoptotic activity of epidermal growth factor through the ubiquitination and proteasomal degradation of p15 BID. Ubiquitinates BRAT1 and this ubiquitination is enhanced in the presence of NDFIP1. Ubiquitinates NEDD9/HEF1, resulting in proteasomal degradation of NEDD9/HEF1. In Mus musculus (Mouse), this protein is E3 ubiquitin-protein ligase Itchy (Itch).